The following is a 169-amino-acid chain: Small ribosomal subunit protein uS5 (169 aa).

Positions 14–77 (LQEKLVAVRR…EQARKNMRKV (64 aa)) constitute an S5 DRBM domain.

This sequence belongs to the universal ribosomal protein uS5 family. As to quaternary structure, part of the 30S ribosomal subunit. Contacts proteins S4 and S8.

In terms of biological role, with S4 and S12 plays an important role in translational accuracy. Located at the back of the 30S subunit body where it stabilizes the conformation of the head with respect to the body. The sequence is that of Small ribosomal subunit protein uS5 from Methylococcus capsulatus (strain ATCC 33009 / NCIMB 11132 / Bath).